We begin with the raw amino-acid sequence, 323 residues long: Aldo-keto reductase family 1 member C21 (323 aa).

Residue 20–24 (GFGTA) coordinates NADP(+). K31 provides a ligand contact to substrate. D50 is a binding site for NADP(+). The active-site Proton donor is the Y55. H117 contacts substrate. NADP(+) contacts are provided by residues 166–167 (SN), Q190, 216–224 (YGVLGTQRY), and 270–280 (TSLKEERIKEN).

Belongs to the aldo/keto reductase family. In terms of assembly, monomer. Detected in kidney and brain.

Its subcellular location is the cytoplasm. The catalysed reaction is androsterone + NADP(+) = 5alpha-androstan-3,17-dione + NADPH + H(+). It catalyses the reaction androsterone + NAD(+) = 5alpha-androstan-3,17-dione + NADH + H(+). Inhibited by high concentrations of substrate. NADP-dependent 17-alpha-hydroxysteroid dehydrogenase that converts 5-alpha-androstane-3,17-dione into androsterone. Has lower 3-alpha-hydroxysteroid dehydrogenase activity. Has broad substrate specificity and acts on various 17-alpha-hydroxysteroids, 17-ketosteroids, 3-alpha hydroxysteroids and 3-ketosteroids. Reduction of keto groups is strictly stereoselective. Reduction of 17-ketosteroids yields only 17-alpha-hydroxysteroids. Likewise, reduction of 3-ketosteroids yields only 3-alpha-hydroxysteroids. The sequence is that of Aldo-keto reductase family 1 member C21 (Akr1c21) from Mus musculus (Mouse).